Consider the following 419-residue polypeptide: Probable G-protein coupled receptor 63 (419 aa).

Topologically, residues 1–81 (MVFSAVLTAF…AFKSLNLPLQ (81 aa)) are extracellular. N16, N28, and N62 each carry an N-linked (GlcNAc...) asparagine glycan. The helical transmembrane segment at 82 to 104 (ITLSAIMIFILFVSFLGNLVVCL) threads the bilayer. The Cytoplasmic portion of the chain corresponds to 105-115 (MVYQKAAMRSA). Residues 116-138 (INILLASLAFADMLLAVLNMPFA) traverse the membrane as a helical segment. The Extracellular segment spans residues 139–157 (LVTILTTRWIFGKFFCRVS). A helical transmembrane segment spans residues 158 to 177 (AMFFWLFVIEGVAILLIISI). At 178 to 196 (DRFLIIVQRQDKLNPYRAK) the chain is on the cytoplasmic side. The helical transmembrane segment at 197–216 (VLIAVSWATSFCVAFPLAVG) threads the bilayer. Residues 217-240 (NPDLQIPSRAPQCVFGYTTNPGYQ) are Extracellular-facing. The helical transmembrane segment at 241-263 (AYVILISLISFFIPFLVILYSFM) threads the bilayer. Residues 264-315 (GILNTLRHNALRIHSYPEGICLSQASKLGLMSLQRPFQMSIDMGFKTRAFTT) are Cytoplasmic-facing. A helical membrane pass occupies residues 316-338 (ILILFAVFIVCWAPFTTYSLVAT). At 339–352 (FSKHFYYQHNFFEI) the chain is on the extracellular side. Residues 353–375 (STWLLWLCYLKSALNPLIYYWRI) traverse the membrane as a helical segment. Over 376-419 (KKFHDACLDMMPKSFKFLPQLPGHTKRRIRPSAVYVCGEHRTVV) the chain is Cytoplasmic.

It belongs to the G-protein coupled receptor 1 family. In terms of tissue distribution, expressed in brain; detected in the frontal cortex, with lower levels in the thalamus, caudate, hypothalamus and midbrain.

The protein localises to the cell membrane. In terms of biological role, orphan receptor. May play a role in brain function. This chain is Probable G-protein coupled receptor 63 (GPR63), found in Homo sapiens (Human).